The chain runs to 110 residues: Small ribosomal subunit protein bS16 (110 aa).

Residues 82-103 (VKKREARNNPEKAVPRKERKAQ) are compositionally biased toward basic and acidic residues. The segment at 82–110 (VKKREARNNPEKAVPRKERKAQAEAAAKG) is disordered.

Belongs to the bacterial ribosomal protein bS16 family.

This Bradyrhizobium sp. (strain ORS 278) protein is Small ribosomal subunit protein bS16.